The sequence spans 416 residues: 2,3-bisphosphoglycerate-independent phosphoglycerate mutase (416 aa).

It belongs to the BPG-independent phosphoglycerate mutase family. A-PGAM subfamily.

It catalyses the reaction (2R)-2-phosphoglycerate = (2R)-3-phosphoglycerate. It participates in carbohydrate degradation; glycolysis; pyruvate from D-glyceraldehyde 3-phosphate: step 3/5. Functionally, catalyzes the interconversion of 2-phosphoglycerate and 3-phosphoglycerate. The sequence is that of 2,3-bisphosphoglycerate-independent phosphoglycerate mutase from Ignicoccus hospitalis (strain KIN4/I / DSM 18386 / JCM 14125).